Consider the following 277-residue polypeptide: Tumor necrosis factor-inducible gene 6 protein (277 aa).

Positions 1-17 are cleaved as a signal peptide; it reads MIILIYLFLLLWEDTQG. Positions 36–129 constitute a Link domain; sequence GVYHREARSG…SERWDAYCYN (94 aa). 3 disulfides stabilise this stretch: cysteine 58-cysteine 127, cysteine 82-cysteine 103, and cysteine 135-cysteine 161. An N-linked (GlcNAc...) asparagine glycan is attached at asparagine 118. The region spanning 135–247 is the CUB domain; that stretch reads CGGVFTDPKQ…GGFQIKYVAM (113 aa). Ca(2+) contacts are provided by glutamate 183, aspartate 191, aspartate 232, serine 234, and valine 235. An intrachain disulfide couples cysteine 188 to cysteine 210. Residue asparagine 258 is glycosylated (N-linked (GlcNAc...) asparagine).

In terms of assembly, interacts (via Link domain) with inter-alpha-inhibitor (I-alpha-I) component bikunin. Interacts with ITIH2/HC2; this interaction is required for transesterification of the HC to hyaluronan. Interacts (via Link and CUB domains) with ITIH1. Chondroitin sulfate may be required for the stability of the complex. Interacts (via Link domain) with various C-X-C and C-C chemokines including PF4, CXCL8, CXCL11, CXCL12, CCL2, CCL7, CCL19, CCL21, and CCL27; this interaction interferes with chemokine binding to glycosaminoglycans. Interacts (primarily via Link domain) with BMP2; this interaction is inhibited by hyaluronan. Interacts (via both Link and CUB domains) with TNFSF11. Interacts (via CUB domain) with FN1 (via type III repeats 9-14); this interaction enhances fibronectin fibril assembly. TNFAIP6 may act as a bridging molecule between FN1 and THBS1. Post-translationally, N-glycosylated. As to expression, expressed in airway epithelium and submucosal gland (at protein level). Colocalizes with bikunin at the ciliary border. Present in bronchoalveolar lavage fluid (at protein level). Expressed in mesenchymal stem cells. Found in the synovial fluid of patients with rheumatoid arthritis.

The protein resides in the secreted. Its function is as follows. Major regulator of extracellular matrix organization during tissue remodeling. Catalyzes the transfer of a heavy chain (HC) from inter-alpha-inhibitor (I-alpha-I) complex to hyaluronan. Cleaves the ester bond between the C-terminus of the HC and GalNAc residue of the chondroitin sulfate chain in I-alpha-I complex followed by transesterification of the HC to hyaluronan. In the process, potentiates the antiprotease function of I-alpha-I complex through release of free bikunin. Acts as a catalyst in the formation of hyaluronan-HC oligomers and hyaluronan-rich matrix surrounding the cumulus cell-oocyte complex, a necessary step for oocyte fertilization. Assembles hyaluronan in pericellular matrices that serve as platforms for receptor clustering and signaling. Enables binding of hyaluronan deposited on the surface of macrophages to LYVE1 on lymphatic endothelium and facilitates macrophage extravasation. Alters hyaluronan binding to functionally latent CD44 on vascular endothelium, switching CD44 into an active state that supports leukocyte rolling. Modulates the interaction of chemokines with extracellular matrix components and proteoglycans on endothelial cell surface, likely preventing chemokine gradient formation. In a negative feedback mechanism, may limit excessive neutrophil recruitment at inflammatory sites by antagonizing the association of CXCL8 with glycosaminoglycans on vascular endothelium. Has a role in osteogenesis and bone remodeling. Inhibits BMP2-dependent differentiation of mesenchymal stem cell to osteoblasts. Protects against bone erosion during inflammation by inhibiting TNFSF11/RANKL-dependent osteoclast activation. This is Tumor necrosis factor-inducible gene 6 protein (TNFAIP6) from Homo sapiens (Human).